The sequence spans 317 residues: tRNA-cytidine(32) 2-sulfurtransferase (317 aa).

Residues 1-29 (MNTANNTLPTAADWAGEDGAPDAADTRKI) form a disordered region. Residues 65–70 (SGGKDS) carry the PP-loop motif motif. Positions 140, 143, and 231 each coordinate [4Fe-4S] cluster.

Belongs to the TtcA family. Homodimer. Requires Mg(2+) as cofactor. [4Fe-4S] cluster is required as a cofactor.

The protein resides in the cytoplasm. The catalysed reaction is cytidine(32) in tRNA + S-sulfanyl-L-cysteinyl-[cysteine desulfurase] + AH2 + ATP = 2-thiocytidine(32) in tRNA + L-cysteinyl-[cysteine desulfurase] + A + AMP + diphosphate + H(+). It participates in tRNA modification. In terms of biological role, catalyzes the ATP-dependent 2-thiolation of cytidine in position 32 of tRNA, to form 2-thiocytidine (s(2)C32). The sulfur atoms are provided by the cysteine/cysteine desulfurase (IscS) system. The sequence is that of tRNA-cytidine(32) 2-sulfurtransferase from Acidovorax ebreus (strain TPSY) (Diaphorobacter sp. (strain TPSY)).